Reading from the N-terminus, the 432-residue chain is Sphingosine N-acyltransferase-like protein ALT7 (432 aa).

A helical transmembrane segment spans residues 55–75; sequence IGLSLGSLLLLILMFTCLPYY. An N-linked (GlcNAc...) asparagine glycan is attached at asparagine 77. 7 helical membrane passes run 91-111, 128-148, 172-192, 226-246, 250-270, 273-293, and 338-358; these read FIFSGVVLFTALRAISMIYLL, FTEQGWLVIHHSLFWTTGMYI, GLTKGYYLLQLAFWLQQIVVV, VGNVILCLVDIVDVLFAFAKL, LGFQYACDVAFCVFLASWLVA, GLYLLVCWSIFTILPTVMPYG, and AFLGLLVGLQVLMLIWLGMIL. Residues 123 to 366 enclose the TLC domain; it reads KLMVRFTEQG…ILKVAYKVFQ (244 aa). Residues 370 to 395 form a disordered region; the sequence is ADDTRSDSEESGYGTSDHEGDCYGAQ.

The protein belongs to the sphingosine N-acyltransferase family.

The protein resides in the membrane. Its pathway is mycotoxin biosynthesis. Functionally, sphingosine N-acyltransferase-like protein; part of the gene cluster that mediates the biosynthesis of the host-selective toxins (HSTs) AAL-toxins, sphinganine-analog mycotoxins responsible for Alternaria stem canker on tomato by the tomato pathotype. The biosynthesis starts with the polyketide synthase ALT1-catalyzed C-16 carbon chain assembly from one starter acetyl-CoA unit with malonyl-CoA extender units. ALT1 also selectively transfers methyl groups at the first and the third cycle of chain elongation for AAL toxin. The C-16 polyketide chain is released from the enzyme by a nucleophilic attack of a carbanion, which is derived from R-carbon of glycin by decarboxylation, on the carbonyl carbon of polyketide acyl chain. This step is probably catalyzed by a pyridoxal 5'-phosphate-dependent aminoacyl transferase ALT4. The respective functions of the other enzymes encoded by the cluster have still to be elucidated. The sphingosine N-acyltransferase-like protein ALT7 seems not to act as a resistance/self-tolerance factor against the toxin in the toxin biosynthetic gene cluster, contrary to what is expected. The polypeptide is Sphingosine N-acyltransferase-like protein ALT7 (Alternaria alternata (Alternaria rot fungus)).